The chain runs to 242 residues: Probable transcriptional regulatory protein BamMC406_2210 (242 aa).

The protein belongs to the TACO1 family.

The protein localises to the cytoplasm. The polypeptide is Probable transcriptional regulatory protein BamMC406_2210 (Burkholderia ambifaria (strain MC40-6)).